We begin with the raw amino-acid sequence, 151 residues long: SsrA-binding protein (151 aa).

Belongs to the SmpB family.

Its subcellular location is the cytoplasm. Functionally, required for rescue of stalled ribosomes mediated by trans-translation. Binds to transfer-messenger RNA (tmRNA), required for stable association of tmRNA with ribosomes. tmRNA and SmpB together mimic tRNA shape, replacing the anticodon stem-loop with SmpB. tmRNA is encoded by the ssrA gene; the 2 termini fold to resemble tRNA(Ala) and it encodes a 'tag peptide', a short internal open reading frame. During trans-translation Ala-aminoacylated tmRNA acts like a tRNA, entering the A-site of stalled ribosomes, displacing the stalled mRNA. The ribosome then switches to translate the ORF on the tmRNA; the nascent peptide is terminated with the 'tag peptide' encoded by the tmRNA and targeted for degradation. The ribosome is freed to recommence translation, which seems to be the essential function of trans-translation. In Lactobacillus acidophilus (strain ATCC 700396 / NCK56 / N2 / NCFM), this protein is SsrA-binding protein.